The chain runs to 1082 residues: Transcription elongation factor SPT5 (1082 aa).

Residues 1–28 are compositionally biased toward acidic residues; sequence MSDSEDSNFSEEEDSERSSEAEEAEVEE. Residues 1–88 are disordered; the sequence is MSDSEDSNFS…DVDDEYEDED (88 aa). Ser32 and Ser36 each carry phosphoserine. 2 stretches are compositionally biased toward acidic residues: residues 38-62 and 76-88; these read KEEEPEEEEEEEEEYDEEEEEEDDD and DEADVDDEYEDED. A Glycyl lysine isopeptide (Lys-Gly) (interchain with G-Cter in SUMO2) cross-link involves residue Lys141. Residues 174-268 form an interaction with SUPT4H1 and SUPT4H2 region; the sequence is DPNLWTVKCK…TDVLKVVKEV (95 aa). The 34-residue stretch at 271-304 folds into the KOW 1 domain; that stretch reads LKPKSWVRLKRGIYKDDIAQVDYVEPSQNTISLK. The interval 311–418 is interaction with RNA polymerase II; the sequence is YDRIKARMSL…STGKEREHNF (108 aa). Residues 326-332 carry the UBR5-degron motif; the sequence is KRKKFKR. KOW domains are found at residues 418–449 and 470–501; these read FQPGDNVEVCEGELINLQGKVLSVDGNKITIM and FKMGDHVKVIAGRFEGDTGLIVRVEENFVILF. Position 577 (Lys577) interacts with RNA. The 34-residue stretch at 592–625 folds into the KOW 4 domain; sequence IHVKDIVKVIDGPHSGREGEIRHLYRSFAFLHCK. Arg617 contacts DNA. Thr661 carries the phosphothreonine modification. Phosphoserine is present on residues Ser664 and Ser684. The disordered stretch occupies residues 669 to 694; it reads SPMHPSAEGQHGGFGSPGGMSRGRGR. Residues 678 to 690 show a composition bias toward gly residues; sequence QHGGFGSPGGMSR. Residues Arg690 and Arg692 each carry the asymmetric dimethylarginine; alternate modification. Omega-N-methylarginine; alternate occurs at positions 690 and 692. Arg692 carries the symmetric dimethylarginine; alternate modification. In terms of domain architecture, KOW 5 spans 698-731; the sequence is ELIGQTVRISQGPYKGYIGVVKDATESTARVELH. An N6-acetyllysine modification is found at Lys712. A compositionally biased stretch (polar residues) spans 741-801; the sequence is RQRLTTVDSQ…RTPHYGSQTP (61 aa). The segment at 741–972 is disordered; the sequence is RQRLTTVDSQ…GSGIEQNSSD (232 aa). The CTR1-1; approximate repeat unit spans residues 748–753; that stretch reads DSQRPG. The interval 748-811 is 9 X 7 AA approximate tandem repeats of G-S-[QR]-T-P-X-[YQ], motif CTR1; it reads DSQRPGGMTS…LHDGSRTPAQ (64 aa). One copy of the CTR1-2 repeat lies at 754-759; that stretch reads GMTSTY. The CTR1-3 repeat unit spans residues 760–765; that stretch reads GRTPMY. Residues 766–772 form a CTR1-4 repeat; that stretch reads GSQTPMY. Phosphothreonine; by CDK9 is present on residues Thr769 and Thr778. The CTR1-5 repeat unit spans residues 775–781; the sequence is GSRTPMY. Residues 782-788 form a CTR1-6 repeat; the sequence is GSQTPLQ. A Phosphoserine modification is found at Ser783. Phosphothreonine occurs at positions 785 and 793. A CTR1-7 repeat occupies 790–796; that stretch reads GSRTPHY. One copy of the CTR1-8 repeat lies at 797 to 803; the sequence is GSQTPLH. Residue Ser798 is modified to Phosphoserine. Phosphothreonine occurs at positions 800 and 808. The CTR1-9 repeat unit spans residues 805-811; that stretch reads GSRTPAQ. Residues 828–838 are compositionally biased toward acidic residues; the sequence is EEYEYAFDDEP. One copy of the CTR2-1 repeat lies at 838-845; sequence PTPSPQAY. A 10 X 8 AA approximate tandem repeats of P-[TS]-P-S-P-[QA]-[SG]-Y, motif CTR2 region spans residues 838–944; the sequence is PTPSPQAYGG…ASPSPSPVGY (107 aa). One copy of the CTR2-2; approximate repeat lies at 848 to 856; sequence TPNPQTPGY. The segment covering 851 to 860 has biased composition (pro residues); it reads PQTPGYPDPS. The stretch at 857–863 is one CTR2-3; approximate repeat; that stretch reads PDPSSPQ. Positions 861–884 are enriched in polar residues; the sequence is SPQVNPQYNPQTPGTPAMYNTDQF. One copy of the CTR2-4; half-length repeat lies at 875 to 879; that stretch reads TPAMY. A CTR2-5; approximate repeat occupies 890–896; it reads PSPQGSY. The span at 890–905 shows a compositional bias: low complexity; it reads PSPQGSYQPSPSPQSY. The CTR2-6 repeat unit spans residues 898–905; it reads PSPSPQSY. A CTR2-7; approximate repeat occupies 910-915; it reads PSPAGY. Residues 918 to 924 form a CTR2-8 repeat; sequence THSPASY. A CTR2-9 repeat occupies 926–933; sequence PTPSPMAY. A CTR2-10 repeat occupies 937 to 944; that stretch reads PSPSPVGY. Thr1028 is subject to Phosphothreonine. A Glycyl lysine isopeptide (Lys-Gly) (interchain with G-Cter in SUMO2) cross-link involves residue Lys1031.

The protein belongs to the SPT5 family. In terms of assembly, interacts with SUPT4H1 to form DSIF. DSIF interacts with the positive transcription elongation factor b complex (P-TEFb complex), which is composed of CDK9 and cyclin-T (CCNT1 or CCNT2). DSIF interacts with RNA polymerase II, and this interaction is reduced by phosphorylation of the C-terminal domain (CTD) of POLR2A by P-TEFb. DSIF also interacts with the NELF complex, which is composed of NELFA, NELFB, NELFD and NELFE, and this interaction occurs following prior binding of DSIF to RNA polymerase II. Also interacts with PRMT1/HRMT1L2, HTATSF1/TATSF1, RNGTT/CAP1A, PRMT5/SKB1, SUPT6H, and can interact with PIN1. Component of a complex which is at least composed of HTATSF1/Tat-SF1, the P-TEFb complex components CDK9 and CCNT1, RNA polymerase II, SUPT5H, and NCL/nucleolin. Interacts with MCM3AP. Methylated by PRMT1/HRMT1L2 and PRMT5/SKB1. Methylation negatively regulates interaction with P-TEFb and RNA polymerase II. Post-translationally, phosphorylated by CDK7 and CDK9. Phosphorylation by P-TEFb (CDK9) at Thr residues of the C-terminal repeats alleviates transcriptional pausing and promotes transcription elongation. Dephosphorylated by the INTAC complex when transcripts are unfavorably configured for transcriptional elongation, leading to premature transcription termination: dephosphorylation is mediated by the PPP2CA component of the INTAC complex. Dephosphorylated by the PNUTS-PP1 complex in termination zones downstream of poly(A) sites, thereby promoting deceleration of RNA polymerase II transcription. Dephosphorylated by the PNUTS-PP1 complex in termination zones downstream of poly(A) sites, thereby promoting deceleration of RNA polymerase II transcription. Phosphorylation may also stimulate interaction with PIN1. Bulk phosphorylation occurs predominantly in mitosis. In terms of processing, ubiquitinated by UBR5 when not assembled in the DSIF complex, leading to its degradation: UBR5 recognizes and binds a degron that is not accessible when SUPT5H is part of the DSIF complex.

The protein resides in the nucleus. Component of the DRB sensitivity-inducing factor complex (DSIF complex), which regulates mRNA processing and transcription elongation by RNA polymerase II. DSIF positively regulates mRNA capping by stimulating the mRNA guanylyltransferase activity of RNGTT/CAP1A. DSIF also acts cooperatively with the negative elongation factor complex (NELF complex) to enhance transcriptional pausing at sites proximal to the promoter. Transcriptional pausing may facilitate the assembly of an elongation competent RNA polymerase II complex. DSIF and NELF promote pausing by inhibition of the transcription elongation factor TFIIS/S-II. TFIIS/S-II binds to RNA polymerase II at transcription pause sites and stimulates the weak intrinsic nuclease activity of the enzyme. Cleavage of blocked transcripts by RNA polymerase II promotes the resumption of transcription from the new 3' terminus and may allow repeated attempts at transcription through natural pause sites. Following phosphorylation by CDK9, DSIF can also positively regulate transcriptional elongation. This is Transcription elongation factor SPT5 (Supt5h) from Mus musculus (Mouse).